The primary structure comprises 1554 residues: MELGSDDFLPPPECPVFEPSWAEFRDPLGYIAKIRPIAEKSGICKIRPPADWQPPFAVEVDNFRFTPRIQRLNELEAQTRVKLNYLDQIAKFWEIQGSSLKIPNVERRILDLYSLSKIVVEEGGYETICKDRRWARVAQRLNYPPGKNIGSLLRSHYERIVYPYEMYQSGANLVQCNTRPFDNEEKDKEYKPHSIPLRQSVQPSKFNSYGRRAKRLQPDPEPTEEDIEKNPELKKLQIYGAGPKMMGLGLMAKDKTLRKKDKEGPECPPTVVVKEELGGDVKMESTSPKTFLEGKEELSHSPEPCTKMTMRLRRNHSNAQFIESYVCRMCSRGDEDDKLLLCDGCDDNYHIFCLLPPLPEIPKGVWRCPKCVMAECKRPPEAFGFEQATREYTLQSFGEMADSFKADYFNMPVHMVPTELVEKEFWRLVNSIEEDVTVEYGADIHSKEFGSGFPVSDSKRHLTPEEEEYATSGWNLNVMPVLEQSVLCHINADISGMKVPWLYVGMVFSAFCWHIEDHWSYSINYLHWGEPKTWYGVPSLAAEHLEEVMKKLTPELFDSQPDLLHQLVTLMNPNTLMSHGVPVVRTNQCAGEFVITFPRAYHSGFNQGYNFAEAVNFCTADWLPAGRQCIEHYRRLRRYCVFSHEELICKMAACPEKLDLNLAAAVHKEMFIMVQEERRLRKALLEKGITEAEREAFELLPDDERQCIKCKTTCFLSALACYDCPDGLVCLSHINDLCKCSSSRQYLRYRYTLDELPAMLHKLKVRAESFDTWANKVRVALEVEDGRKRSLEELRALESEARERRFPNSELLQRLKNCLSEAEACVSRALGLVSGQEAGPDRVAGLQMTLAELRDFLGQMNNLPCAMHQIGDVKGILEQVEAYQTEAREALVSQPSSPGLLQSLLERGQQLGVEVPEAQQLQRQVEQARWLDEVKRTLAPSARRGTLAIMRGLLVAGASVAPSPAVDKAQAELQELLTIAERWEEKAHLCLEARQKHPPATLEAIIHEAENIPVHLPNIQSLKEALAKARAWIADVDEIQNGDHYPCLDDLEGLVAVGRDLPVGLEELRQLELQVLTAHSWREKASKTFLKKNSCYTLLEVLCPCADAGSDSTKRSRWMEKELGLYKSDTELLGLSAQDLRDPGSVIVAFKEGEQKEKEGILQLRRTNSAKPSPLALLTTASSTASICVCGQVPAGVGALQCDLCQDWFHGRCVTVPRLLSSQRSSLPSSPLLAWWEWDTKFLCPLCMRSRRPRLETILALLVALQRLPVRLPEGEALQCLTERAISWQGRARQVLASEEVTALLGRLAELRQRLQAESKPEESLAYPSDGGEGTGNMPKVQGLLENGDSVTSPEKVATEEGSGKRDLELLSSILPQLSGPVLELPEATRAPLEELMMEGDLLEVTLDENHSIWQLLQAGQPPDLKRVQTLLELEKAERHGSRTRGRALERRRRRKVDRGGEPDDPAREELEPKRVRSSGPEAEEVQEEEELEEETGGEVPPVPFPNSGSPSIQEDQDGLEPVLEAGSDTSAPFSTLTSRLLMSCPQQPSLQQL.

In terms of domain architecture, JmjN spans 14–55; it reads CPVFEPSWAEFRDPLGYIAKIRPIAEKSGICKIRPPADWQPP. The region spanning 79–169 is the ARID domain; the sequence is TRVKLNYLDQ…IVYPYEMYQS (91 aa). Positions 197-207 are enriched in polar residues; the sequence is LRQSVQPSKFN. The tract at residues 197 to 227 is disordered; it reads LRQSVQPSKFNSYGRRAKRLQPDPEPTEEDI. Residues lysine 205, lysine 229, lysine 244, and lysine 274 each participate in a glycyl lysine isopeptide (Lys-Gly) (interchain with G-Cter in SUMO2) cross-link. Residues 284–303 are disordered; it reads ESTSPKTFLEGKEELSHSPE. The residue at position 287 (serine 287) is a Phosphoserine. Lysine 295 is covalently cross-linked (Glycyl lysine isopeptide (Lys-Gly) (interchain with G-Cter in SUMO2)). Serine 301 and serine 317 each carry phosphoserine. A PHD-type 1 zinc finger spans residues 326–372; that stretch reads VCRMCSRGDEDDKLLLCDGCDDNYHIFCLLPPLPEIPKGVWRCPKCV. Residues 468-634 enclose the JmjC domain; sequence EYATSGWNLN…AGRQCIEHYR (167 aa). Fe cation-binding residues include histidine 514, aspartate 517, and histidine 602. Serine 893 and serine 897 each carry phosphoserine. A Glycyl lysine isopeptide (Lys-Gly) (interchain with G-Cter in SUMO2) cross-link involves residue lysine 1127. The segment at 1187–1248 adopts a PHD-type 2 zinc-finger fold; that stretch reads ICVCGQVPAG…DTKFLCPLCM (62 aa). Disordered stretches follow at residues 1319-1364 and 1437-1535; these read SKPE…EGSG and AERH…APFS. Position 1353 is a phosphoserine (serine 1353). Positions 1442–1457 are enriched in basic residues; that stretch reads SRTRGRALERRRRRKV. The span at 1458–1475 shows a compositional bias: basic and acidic residues; the sequence is DRGGEPDDPAREELEPKR. Positions 1482–1497 are enriched in acidic residues; that stretch reads EAEEVQEEEELEEETG.

Belongs to the JARID1 histone demethylase family. As to quaternary structure, part of two distinct complexes, one containing E2F6, and the other containing REST. Interacts with ZMYND8. It depends on Fe(2+) as a cofactor.

It localises to the nucleus. It catalyses the reaction N(6),N(6),N(6)-trimethyl-L-lysyl(4)-[histone H3] + 3 2-oxoglutarate + 3 O2 = L-lysyl(4)-[histone H3] + 3 formaldehyde + 3 succinate + 3 CO2. Its function is as follows. Histone demethylase that specifically demethylates 'Lys-4' of histone H3, thereby playing a central role in histone code. Does not demethylate histone H3 'Lys-9', H3 'Lys-27', H3 'Lys-36', H3 'Lys-79' or H4 'Lys-20'. Demethylates trimethylated and dimethylated but not monomethylated H3 'Lys-4'. Participates in transcriptional repression of neuronal genes by recruiting histone deacetylases and REST at neuron-restrictive silencer elements. Represses the CLOCK-BMAL1 heterodimer-mediated transcriptional activation of the core clock component PER2. The polypeptide is Lysine-specific demethylase 5C (Kdm5c) (Mus musculus (Mouse)).